Reading from the N-terminus, the 244-residue chain is Phosphoadenosine 5'-phosphosulfate reductase (244 aa).

Cys239 serves as the catalytic Nucleophile; cysteine thiosulfonate intermediate.

The protein belongs to the PAPS reductase family. CysH subfamily.

It localises to the cytoplasm. The enzyme catalyses [thioredoxin]-disulfide + sulfite + adenosine 3',5'-bisphosphate + 2 H(+) = [thioredoxin]-dithiol + 3'-phosphoadenylyl sulfate. Its pathway is sulfur metabolism; hydrogen sulfide biosynthesis; sulfite from sulfate: step 3/3. Catalyzes the formation of sulfite from phosphoadenosine 5'-phosphosulfate (PAPS) using thioredoxin as an electron donor. The sequence is that of Phosphoadenosine 5'-phosphosulfate reductase from Salmonella paratyphi A (strain AKU_12601).